The chain runs to 130 residues: Small ribosomal subunit protein uS9 (130 aa).

The tract at residues 98–130 (LKRAGLLTRDPRMKERKKPGLKKARRSPQFSKR) is disordered. Residues 111 to 130 (KERKKPGLKKARRSPQFSKR) are compositionally biased toward basic residues.

This sequence belongs to the universal ribosomal protein uS9 family.

This chain is Small ribosomal subunit protein uS9, found in Staphylococcus saprophyticus subsp. saprophyticus (strain ATCC 15305 / DSM 20229 / NCIMB 8711 / NCTC 7292 / S-41).